Reading from the N-terminus, the 347-residue chain is Phosphoribosylformylglycinamidine cyclo-ligase (347 aa).

This sequence belongs to the AIR synthase family.

The protein resides in the cytoplasm. The enzyme catalyses 2-formamido-N(1)-(5-O-phospho-beta-D-ribosyl)acetamidine + ATP = 5-amino-1-(5-phospho-beta-D-ribosyl)imidazole + ADP + phosphate + H(+). It functions in the pathway purine metabolism; IMP biosynthesis via de novo pathway; 5-amino-1-(5-phospho-D-ribosyl)imidazole from N(2)-formyl-N(1)-(5-phospho-D-ribosyl)glycinamide: step 2/2. The chain is Phosphoribosylformylglycinamidine cyclo-ligase from Prochlorococcus marinus (strain AS9601).